Here is a 274-residue protein sequence, read N- to C-terminus: Bis(5'-nucleosyl)-tetraphosphatase, symmetrical (274 aa).

It belongs to the Ap4A hydrolase family.

It catalyses the reaction P(1),P(4)-bis(5'-adenosyl) tetraphosphate + H2O = 2 ADP + 2 H(+). Hydrolyzes diadenosine 5',5'''-P1,P4-tetraphosphate to yield ADP. The polypeptide is Bis(5'-nucleosyl)-tetraphosphatase, symmetrical (Shewanella baltica (strain OS185)).